We begin with the raw amino-acid sequence, 206 residues long: Twist-related protein 1 (206 aa).

Positions 1–18 (MMQDVSSSPVSPADDSLS) are enriched in low complexity. Positions 1–109 (MMQDVSSSPV…GGGSPQSYEE (109 aa)) are disordered. Positions 34 to 43 (RGARKRRSSR) are enriched in basic residues. Gly residues-rich tracts occupy residues 48–65 (GSAG…GGDE) and 78–103 (SAGG…GGGS). The 52-residue stretch at 112–163 (TQRVMANVRERQRTQSLNEAFAALRKIIPTLPSDKLSKIQTLKLAARYIDFL) folds into the bHLH domain. Residues 165–195 (QVLQSDELDSKMASCSYVAHERLSYAFSVWR) are sufficient for transactivation activity.

In terms of assembly, efficient DNA binding requires dimerization with another bHLH protein. Homodimer or heterodimer with E proteins such as TCF3. ID1 binds preferentially to TCF3 but does not interact efficiently with TWIST1 so ID1 levels control the amount of TCF3 available to dimerize with TWIST1 and thus determine the type of dimer formed. Subset of mesodermal cells.

Its subcellular location is the nucleus. Functionally, acts as a transcriptional regulator. Inhibits myogenesis by sequestrating E proteins, inhibiting trans-activation by MEF2, and inhibiting DNA-binding by MYOD1 through physical interaction. This interaction probably involves the basic domains of both proteins. Also represses expression of pro-inflammatory cytokines such as TNFA and IL1B. Regulates cranial suture patterning and fusion. Activates transcription as a heterodimer with E proteins. Regulates gene expression differentially, depending on dimer composition. Homodimers induce expression of FGFR2 and POSTN while heterodimers repress FGFR2 and POSTN expression and induce THBS1 expression. Heterodimerization is also required for osteoblast differentiation. Represses the activity of the circadian transcriptional activator: NPAS2-BMAL1 heterodimer. The sequence is that of Twist-related protein 1 (Twist1) from Mus musculus (Mouse).